Consider the following 136-residue polypeptide: MTTPIEKTDAEWKALLAEKGAEPAAFEVTRHAATERPFTGKYEAHWDDGTYHCICCGAKLFESSTKFDAGCGWPSFSQEAVPGAIRNIVDRSHGMVRTENVCANCGAHLGHVFPDGPTETGLRYCMNSASLDFKKK.

Positions 9–136 (DAEWKALLAE…NSASLDFKKK (128 aa)) constitute a MsrB domain. Positions 53, 56, 102, and 105 each coordinate Zn(2+). Cys-125 functions as the Nucleophile in the catalytic mechanism.

It belongs to the MsrB Met sulfoxide reductase family. It depends on Zn(2+) as a cofactor.

It carries out the reaction L-methionyl-[protein] + [thioredoxin]-disulfide + H2O = L-methionyl-(R)-S-oxide-[protein] + [thioredoxin]-dithiol. In Variovorax paradoxus (strain S110), this protein is Peptide methionine sulfoxide reductase MsrB.